A 390-amino-acid polypeptide reads, in one-letter code: Protein-glutamate methylesterase/protein-glutamine glutaminase (390 aa).

A Response regulatory domain is found at 4–121 (RALVVDDSGF…SGDMEQVKRQ (118 aa)). At aspartate 55 the chain carries 4-aspartylphosphate. The interval 130-198 (GGGRGAPAGR…AAPAPERGQR (69 aa)) is disordered. Composition is skewed to low complexity over residues 136-148 (PAGR…APVD) and 179-193 (EAPV…APAP). Residues 201 to 390 (PGALRLVVIG…QVGEELAKLR (190 aa)) form the CheB-type methylesterase domain. Active-site residues include serine 212, histidine 239, and aspartate 335.

Belongs to the CheB family. Phosphorylated by CheA. Phosphorylation of the N-terminal regulatory domain activates the methylesterase activity.

Its subcellular location is the cytoplasm. The enzyme catalyses [protein]-L-glutamate 5-O-methyl ester + H2O = L-glutamyl-[protein] + methanol + H(+). It carries out the reaction L-glutaminyl-[protein] + H2O = L-glutamyl-[protein] + NH4(+). Functionally, involved in chemotaxis. Part of a chemotaxis signal transduction system that modulates chemotaxis in response to various stimuli. Catalyzes the demethylation of specific methylglutamate residues introduced into the chemoreceptors (methyl-accepting chemotaxis proteins or MCP) by CheR. Also mediates the irreversible deamidation of specific glutamine residues to glutamic acid. In Alkalilimnicola ehrlichii (strain ATCC BAA-1101 / DSM 17681 / MLHE-1), this protein is Protein-glutamate methylesterase/protein-glutamine glutaminase.